The sequence spans 157 residues: Probable succinate transporter subunit YjjB (157 aa).

Helical transmembrane passes span 8-28 (FALAQDMILAAIPAVGFAMVF), 50-70 (MILMTSGLNIEWSTFMASMLV), 87-107 (VFTVAAVIPMFPGISAYTAMI), and 129-149 (FLTASSIVGALSIGLSIPGLW).

Belongs to the ThrE exporter (TC 2.A.79) family. As to quaternary structure, the transporter is composed of YjjB and YjjP.

The protein resides in the cell inner membrane. Involved in succinate export with YjjP. Both proteins are required for export. The protein is Probable succinate transporter subunit YjjB of Escherichia coli (strain ATCC 8739 / DSM 1576 / NBRC 3972 / NCIMB 8545 / WDCM 00012 / Crooks).